A 796-amino-acid chain; its full sequence is Putative aconitate hydratase, mitochondrial (796 aa).

A mitochondrion-targeting transit peptide spans 1 to 28; the sequence is MLRQIVSQRSAARRQLIDQLAPCLRRGL. Residues Gln108 and 201–203 contribute to the substrate site; that span reads DSH. Residues Cys399, Cys462, and Cys465 each coordinate [4Fe-4S] cluster. Residues Arg489 and Arg494 each contribute to the substrate site. Residues 540–569 form a disordered region; the sequence is EPPTGQDLPSKGFEAGNPAFQPSAPVPDSS. A substrate-binding site is contributed by 685-686; it reads AR.

The protein belongs to the aconitase/IPM isomerase family.

It is found in the mitochondrion. Functionally, has no detectable activity towards cis-acontiate or cis-homoaconitate. The protein is Putative aconitate hydratase, mitochondrial (acoB) of Emericella nidulans (strain FGSC A4 / ATCC 38163 / CBS 112.46 / NRRL 194 / M139) (Aspergillus nidulans).